Consider the following 638-residue polypeptide: Homeobox protein 10 (638 aa).

Disordered regions lie at residues 23–55 (ETQPTTPTTQPTTPTTNTISTTTNTITSTLNTN), 76–139 (TDEN…VNTN), and 195–219 (IANEDKESLPEPQTNSNVNGNEEAK). 2 stretches are compositionally biased toward low complexity: residues 24-55 (TQPTTPTTQPTTPTTNTISTTTNTITSTLNTN) and 80-139 (NTSV…VNTN). A compositionally biased stretch (polar residues) spans 205-214 (EPQTNSNVNG). Positions 301–360 (NKKKRQRTSPEQLAILEQIFETDKMPSQQIRVRLANQLGMSSRRVQIWFQNKRAKVKRGG) form a DNA-binding region, homeobox. Disordered regions lie at residues 381-431 (EDED…TSSD) and 448-638 (SSSS…IVKN). 3 stretches are compositionally biased toward low complexity: residues 388–411 (SLTIDESGNNNNNSGNNNNNNNNG), 419–430 (LSSSPTNLNTSS), and 462–501 (NNTNNNNNNNNNNNNNNNNNNNNNNNHTTTTTTTTTTTTT). 2 stretches are compositionally biased toward polar residues: residues 502–522 (SSSPPLTSFNFQLNQSLNKLT) and 545–573 (SLNSTASSLPSFPQIKLNSSSKHIPTDKQ). The span at 575–625 (NSDFSNFNNNNNNNNNNNNNNNNNNNINNNGNNNSNNNDSNNNNNKSNFSD) shows a compositional bias: low complexity.

Its subcellular location is the nucleus. Putative transcription factor. This chain is Homeobox protein 10 (hbx10), found in Dictyostelium discoideum (Social amoeba).